The chain runs to 327 residues: Neurogenic differentiation factor 6-A (327 aa).

The tract at residues Gly-17 to Arg-85 is disordered. The segment covering Cys-24–Met-46 has biased composition (basic and acidic residues). Residues Asp-47–Asp-63 are compositionally biased toward acidic residues. Basic residues predominate over residues Pro-68–Lys-80. The Nuclear localization signal signature appears at Arg-74 to Lys-80. The 53-residue stretch at Val-88–Leu-140 folds into the bHLH domain.

As to quaternary structure, efficient DNA binding requires dimerization with another bHLH protein. Embryonic olfactory bulbs. In adult, expressed in brain, eye, intestine, muscle, ovary and skin.

The protein localises to the nucleus. Differentiation factor required for neurogenesis. Acts as an upstream activator of isl1. The polypeptide is Neurogenic differentiation factor 6-A (Danio rerio (Zebrafish)).